Consider the following 21-residue polypeptide: Hemolymph 65 kDa lectin BG04 (21 aa).

As to expression, hemolymph.

The protein resides in the secreted. Functionally, binds and precipitates antigens of the parasite Echinostoma paraensei. The polypeptide is Hemolymph 65 kDa lectin BG04 (BG04) (Biomphalaria glabrata (Bloodfluke planorb)).